The sequence spans 80 residues: Exodeoxyribonuclease 7 small subunit (80 aa).

Belongs to the XseB family. Heterooligomer composed of large and small subunits.

The protein resides in the cytoplasm. The catalysed reaction is Exonucleolytic cleavage in either 5'- to 3'- or 3'- to 5'-direction to yield nucleoside 5'-phosphates.. Functionally, bidirectionally degrades single-stranded DNA into large acid-insoluble oligonucleotides, which are then degraded further into small acid-soluble oligonucleotides. The protein is Exodeoxyribonuclease 7 small subunit of Pseudomonas putida (strain ATCC 700007 / DSM 6899 / JCM 31910 / BCRC 17059 / LMG 24140 / F1).